The sequence spans 191 residues: MVKMIVGLGNPGSKYNDTKHNIGFMAVDRIVKDLDVNFTEDKNFKAEIGSDFINGEKIYFIKPTTFMNNSGIAVKALLTYYNISIKDMIIIYDDLDMEVGKIRFRQKGSAGGHNGIKSIIAHLGTQEFDRIKVGIGRPNGRMTVINHVLGKFDKNDEIMILNTLDKVDNAVNYYLQTNDFQKTMQKYNGLK.

A tRNA-binding site is contributed by Tyr15. The active-site Proton acceptor is His20. TRNA is bound by residues Phe66, Asn68, and Asn114.

It belongs to the PTH family. In terms of assembly, monomer.

Its subcellular location is the cytoplasm. It carries out the reaction an N-acyl-L-alpha-aminoacyl-tRNA + H2O = an N-acyl-L-amino acid + a tRNA + H(+). In terms of biological role, hydrolyzes ribosome-free peptidyl-tRNAs (with 1 or more amino acids incorporated), which drop off the ribosome during protein synthesis, or as a result of ribosome stalling. Catalyzes the release of premature peptidyl moieties from peptidyl-tRNA molecules trapped in stalled 50S ribosomal subunits, and thus maintains levels of free tRNAs and 50S ribosomes. The sequence is that of Peptidyl-tRNA hydrolase from Streptococcus agalactiae serotype III (strain NEM316).